Here is a 988-residue protein sequence, read N- to C-terminus: DNA-binding protein SMUBP-2 (988 aa).

At A2 the chain carries N-acetylalanine. Residues 213–220, Q402, Y441, and E570 contribute to the ATP site; that span reads GPPGTGKT. The segment at 637–783 is SS DNA-binding; the sequence is TAFEYLDDIV…KARHITVSRR (147 aa). Disordered regions lie at residues 651 to 722, 765 to 820, and 835 to 872; these read THEG…GGTD, LKHD…PHGS, and RQQG…ALPS. Residues 702–718 show a composition bias toward polar residues; sequence SQVQPQHSSKANGSDRT. Residues 721-784 enclose the R3H domain; that stretch reads TDRTEHFRAM…ARHITVSRRS (64 aa). Residues 765-775 are compositionally biased toward basic and acidic residues; sequence LKHDSTGEGKA. Phosphoserine is present on residues S797 and S800. Low complexity predominate over residues 802–817; that stretch reads AQAEPEPQVEQPVGQP. The segment covering 835 to 844 has biased composition (polar residues); it reads RQQGCQAQSQ. Residues 857–861 carry the Nuclear localization signal motif; it reads KKKKK. The segment at 884–933 adopts an AN1-type zinc-finger fold; sequence VKADNTCSFTKCSASTTTLGQFCMHCSRRYCLSHHLPEIHGCGEKARAHA. C890, C895, C906, C909, C914, H917, H923, and C925 together coordinate Zn(2+). The tract at residues 943–988 is disordered; sequence LYAGSGTKDRALDPAKRAQLQRKLDKKLGELSSQRTSKKKEKERGT. Basic and acidic residues predominate over residues 949 to 971; sequence TKDRALDPAKRAQLQRKLDKKLG. Residues 957 to 986 are a coiled coil; sequence AKRAQLQRKLDKKLGELSSQRTSKKKEKER.

The protein belongs to the DNA2/NAM7 helicase family. As to quaternary structure, homooligomer. Interacts with RUVBL1. Interacts with RUVBL2. Interacts with GTF3C1. Interacts with ABT1. Interacts with ribosomes. In terms of tissue distribution, expressed in liver, skin, muscle, heart, brain, spleen and kidney.

It is found in the nucleus. Its subcellular location is the cytoplasm. The protein resides in the cell projection. The protein localises to the axon. It carries out the reaction ATP + H2O = ADP + phosphate + H(+). Functionally, 5' to 3' helicase that unwinds RNA and DNA duplexes in an ATP-dependent reaction. Specific to 5'-phosphorylated single-stranded guanine-rich sequences. May play a role in RNA metabolism, ribosome biogenesis or initiation of translation. May play a role in regulation of transcription. Interacts with tRNA-Tyr. The chain is DNA-binding protein SMUBP-2 (Ighmbp2) from Rattus norvegicus (Rat).